Here is a 930-residue protein sequence, read N- to C-terminus: Isoleucine--tRNA ligase (930 aa).

A 'HIGH' region motif is present at residues 57–67 (PYANGHIHLGT). Residue glutamate 559 coordinates L-isoleucyl-5'-AMP. A 'KMSKS' region motif is present at residues 600–604 (KMSKS). Lysine 603 lines the ATP pocket. The Zn(2+) site is built by cysteine 899, cysteine 902, cysteine 918, and cysteine 921.

Belongs to the class-I aminoacyl-tRNA synthetase family. IleS type 1 subfamily. In terms of assembly, monomer. It depends on Zn(2+) as a cofactor.

It localises to the cytoplasm. The catalysed reaction is tRNA(Ile) + L-isoleucine + ATP = L-isoleucyl-tRNA(Ile) + AMP + diphosphate. Its function is as follows. Catalyzes the attachment of isoleucine to tRNA(Ile). As IleRS can inadvertently accommodate and process structurally similar amino acids such as valine, to avoid such errors it has two additional distinct tRNA(Ile)-dependent editing activities. One activity is designated as 'pretransfer' editing and involves the hydrolysis of activated Val-AMP. The other activity is designated 'posttransfer' editing and involves deacylation of mischarged Val-tRNA(Ile). This Desulforudis audaxviator (strain MP104C) protein is Isoleucine--tRNA ligase.